The chain runs to 1069 residues: Protogenin B (1069 aa).

Positions 1-26 (MGSVRWKTHQQWLIIFWILSFSGVFG) are cleaved as a signal peptide. At 27 to 936 (FSELWFSIEP…LYHIDEKSMS (910 aa)) the chain is on the extracellular side. Ig-like domains follow at residues 30–117 (LWFS…ARLT), 122–208 (LVFS…AELV), 221–308 (PLII…GNVT), and 312–396 (PSLV…SRLI). Cystine bridges form between Cys-51–Cys-100 and Cys-143–Cys-191. N-linked (GlcNAc...) asparagine glycosylation is found at Asn-81, Asn-88, Asn-180, and Asn-229. Cys-242 and Cys-290 are oxidised to a cystine. N-linked (GlcNAc...) asparagine glycans are attached at residues Asn-299 and Asn-306. A disordered region spans residues 317–336 (KPESQTRPRAGTARFSCQAE). A disulfide bridge links Cys-333 with Cys-380. 5 consecutive Fibronectin type-III domains span residues 406–500 (APRN…TLED), 502–601 (PLRT…TPKT), 608–701 (PAPN…CPST), 711–804 (PPDH…TLLE), and 809–904 (PPES…VKGK). N-linked (GlcNAc...) asparagine glycans are attached at residues Asn-458, Asn-473, and Asn-560. The span at 590-605 (PSAWSSHRTPKTSSAT) shows a compositional bias: polar residues. The tract at residues 590–609 (PSAWSSHRTPKTSSATVPPA) is disordered. Residues Asn-618, Asn-720, and Asn-834 are each glycosylated (N-linked (GlcNAc...) asparagine). A helical transmembrane segment spans residues 937–957 (GIIVGVCIALSCIILCIFILL). At 958-1069 (SKTQTQKSAS…KTVLCYEDEA (112 aa)) the chain is on the cytoplasmic side.

This sequence belongs to the immunoglobulin superfamily. DCC family. In terms of tissue distribution, initially expressed in the ventral forebrain and ventral spinal cord. Later, also expressed in the midbrain and in parts of the diencephalon and hindbrain.

The protein resides in the membrane. In terms of biological role, may play a role in anteroposterior axis elongation. This chain is Protogenin B, found in Danio rerio (Zebrafish).